We begin with the raw amino-acid sequence, 450 residues long: Phosphoglucosamine mutase (450 aa).

Residue serine 101 is the Phosphoserine intermediate of the active site. 4 residues coordinate Mg(2+): serine 101, aspartate 242, aspartate 244, and aspartate 246. Residue serine 101 is modified to Phosphoserine.

It belongs to the phosphohexose mutase family. Requires Mg(2+) as cofactor. In terms of processing, activated by phosphorylation.

The catalysed reaction is alpha-D-glucosamine 1-phosphate = D-glucosamine 6-phosphate. In terms of biological role, catalyzes the conversion of glucosamine-6-phosphate to glucosamine-1-phosphate. The polypeptide is Phosphoglucosamine mutase (Rhodopseudomonas palustris (strain TIE-1)).